The primary structure comprises 137 residues: NADH-quinone oxidoreductase subunit A (137 aa).

3 consecutive transmembrane segments (helical) span residues 12 to 32 (WAFA…LGVS), 68 to 88 (LVAM…AWAV), and 94 to 114 (GWVG…GLVY).

This sequence belongs to the complex I subunit 3 family. In terms of assembly, NDH-1 is composed of 13 different subunits. Subunits NuoA, H, J, K, L, M, N constitute the membrane sector of the complex.

Its subcellular location is the cell inner membrane. The catalysed reaction is a quinone + NADH + 5 H(+)(in) = a quinol + NAD(+) + 4 H(+)(out). Functionally, NDH-1 shuttles electrons from NADH, via FMN and iron-sulfur (Fe-S) centers, to quinones in the respiratory chain. The immediate electron acceptor for the enzyme in this species is believed to be ubiquinone. Couples the redox reaction to proton translocation (for every two electrons transferred, four hydrogen ions are translocated across the cytoplasmic membrane), and thus conserves the redox energy in a proton gradient. The polypeptide is NADH-quinone oxidoreductase subunit A (Ectopseudomonas mendocina (strain ymp) (Pseudomonas mendocina)).